The following is a 451-amino-acid chain: ATP synthase subunit beta (451 aa).

143–150 provides a ligand contact to ATP; it reads GGAGVGKT.

Belongs to the ATPase alpha/beta chains family. F-type ATPases have 2 components, CF(1) - the catalytic core - and CF(0) - the membrane proton channel. CF(1) has five subunits: alpha(3), beta(3), gamma(1), delta(1), epsilon(1). CF(0) has three main subunits: a(1), b(2) and c(9-12). The alpha and beta chains form an alternating ring which encloses part of the gamma chain. CF(1) is attached to CF(0) by a central stalk formed by the gamma and epsilon chains, while a peripheral stalk is formed by the delta and b chains.

It is found in the cell membrane. It catalyses the reaction ATP + H2O + 4 H(+)(in) = ADP + phosphate + 5 H(+)(out). In terms of biological role, produces ATP from ADP in the presence of a proton gradient across the membrane. The catalytic sites are hosted primarily by the beta subunits. The sequence is that of ATP synthase subunit beta from Coprothermobacter proteolyticus (strain ATCC 35245 / DSM 5265 / OCM 4 / BT).